The primary structure comprises 267 residues: Ribosomal RNA large subunit methyltransferase E (267 aa).

Residues G52, F54, D72, D90, and D114 each coordinate S-adenosyl-L-methionine. Catalysis depends on K154, which acts as the Proton acceptor. Residues E212–R252 show a composition bias toward low complexity. Residues E212–A267 are disordered. Residues P253–A267 are compositionally biased toward basic residues.

The protein belongs to the class I-like SAM-binding methyltransferase superfamily. RNA methyltransferase RlmE family.

Its subcellular location is the cytoplasm. It catalyses the reaction uridine(2552) in 23S rRNA + S-adenosyl-L-methionine = 2'-O-methyluridine(2552) in 23S rRNA + S-adenosyl-L-homocysteine + H(+). Its function is as follows. Specifically methylates the uridine in position 2552 of 23S rRNA at the 2'-O position of the ribose in the fully assembled 50S ribosomal subunit. This Anaeromyxobacter dehalogenans (strain 2CP-C) protein is Ribosomal RNA large subunit methyltransferase E.